The primary structure comprises 156 residues: Small ribosomal subunit protein uS7 (156 aa).

It belongs to the universal ribosomal protein uS7 family. In terms of assembly, part of the 30S ribosomal subunit. Contacts proteins S9 and S11.

Its function is as follows. One of the primary rRNA binding proteins, it binds directly to 16S rRNA where it nucleates assembly of the head domain of the 30S subunit. Is located at the subunit interface close to the decoding center, probably blocks exit of the E-site tRNA. This chain is Small ribosomal subunit protein uS7, found in Kocuria rhizophila (strain ATCC 9341 / DSM 348 / NBRC 103217 / DC2201).